The primary structure comprises 115 residues: Nitrogenase-stabilizing/protective protein NifW (115 aa).

Belongs to the NifW family. In terms of assembly, homotrimer; associates with NifD.

Its function is as follows. May protect the nitrogenase Fe-Mo protein from oxidative damage. The polypeptide is Nitrogenase-stabilizing/protective protein NifW (Methylobacterium sp. (strain 4-46)).